The chain runs to 150 residues: UPF0178 protein AHA_0543 (150 aa).

Belongs to the UPF0178 family.

This chain is UPF0178 protein AHA_0543, found in Aeromonas hydrophila subsp. hydrophila (strain ATCC 7966 / DSM 30187 / BCRC 13018 / CCUG 14551 / JCM 1027 / KCTC 2358 / NCIMB 9240 / NCTC 8049).